The chain runs to 828 residues: DNA gyrase subunit A (828 aa).

One can recognise a Topo IIA-type catalytic domain in the interval 32–497 (LPDVRDGLKP…EVLSLEDEDL (466 aa)). Tyr-120 functions as the O-(5'-phospho-DNA)-tyrosine intermediate in the catalytic mechanism. The short motif at 524 to 530 (QKRGGRG) is the GyrA-box element.

It belongs to the type II topoisomerase GyrA/ParC subunit family. Heterotetramer, composed of two GyrA and two GyrB chains. In the heterotetramer, GyrA contains the active site tyrosine that forms a transient covalent intermediate with DNA, while GyrB binds cofactors and catalyzes ATP hydrolysis.

It is found in the cytoplasm. The catalysed reaction is ATP-dependent breakage, passage and rejoining of double-stranded DNA.. A type II topoisomerase that negatively supercoils closed circular double-stranded (ds) DNA in an ATP-dependent manner to modulate DNA topology and maintain chromosomes in an underwound state. Negative supercoiling favors strand separation, and DNA replication, transcription, recombination and repair, all of which involve strand separation. Also able to catalyze the interconversion of other topological isomers of dsDNA rings, including catenanes and knotted rings. Type II topoisomerases break and join 2 DNA strands simultaneously in an ATP-dependent manner. This Streptococcus pyogenes serotype M3 (strain ATCC BAA-595 / MGAS315) protein is DNA gyrase subunit A.